Reading from the N-terminus, the 183-residue chain is Putative 3-methyladenine DNA glycosylase (183 aa).

Belongs to the DNA glycosylase MPG family.

The sequence is that of Putative 3-methyladenine DNA glycosylase from Rickettsia conorii (strain ATCC VR-613 / Malish 7).